Reading from the N-terminus, the 93-residue chain is U12-lycotoxin-Ls1d (93 aa).

The first 18 residues, 1 to 18, serve as a signal peptide directing secretion; the sequence is MKFAVILLFSLVVLAVAS. Residues 19-38 constitute a propeptide that is removed on maturation; sequence ESVEEVRREIDIEDLPEQQR.

Belongs to the neurotoxin 31 family. Contains 5 disulfide bonds. As to expression, expressed by the venom gland.

Its subcellular location is the secreted. The polypeptide is U12-lycotoxin-Ls1d (Lycosa singoriensis (Wolf spider)).